We begin with the raw amino-acid sequence, 475 residues long: Ras-GEF domain-containing family member 1A (475 aa).

The N-terminal Ras-GEF domain maps to 33–164; sequence QDGSLVSGSL…SISQMTQNVL (132 aa). Residues 208-455 enclose the Ras-GEF domain; that stretch reads DPLILAQQLT…FLASFENEGP (248 aa).

In terms of biological role, guanine nucleotide exchange factor (GEF) with specificity for rap2a and other Ras family proteins (in vitro). Plays a role in cell migration. The polypeptide is Ras-GEF domain-containing family member 1A (rasgef1a) (Xenopus tropicalis (Western clawed frog)).